The following is a 373-amino-acid chain: sn-glycerol-3-phosphate import ATP-binding protein UgpC 2 (373 aa).

An ABC transporter domain is found at 4–234; that stretch reads IDIRQVRKSY…PASTFVASFI (231 aa). 36–43 contacts ATP; it reads GPSGCGKS.

The protein belongs to the ABC transporter superfamily. sn-glycerol-3-phosphate importer (TC 3.A.1.1.3) family. In terms of assembly, the complex is composed of two ATP-binding proteins (UgpC), two transmembrane proteins (UgpA and UgpE) and a solute-binding protein (UgpB).

It is found in the cell inner membrane. The enzyme catalyses sn-glycerol 3-phosphate(out) + ATP + H2O = sn-glycerol 3-phosphate(in) + ADP + phosphate + H(+). Its function is as follows. Part of the ABC transporter complex UgpBAEC involved in sn-glycerol-3-phosphate (G3P) import. Responsible for energy coupling to the transport system. This chain is sn-glycerol-3-phosphate import ATP-binding protein UgpC 2, found in Agrobacterium fabrum (strain C58 / ATCC 33970) (Agrobacterium tumefaciens (strain C58)).